The following is a 148-amino-acid chain: UPF0179 protein UNCMA_27840 (148 aa).

The protein belongs to the UPF0179 family.

The protein is UPF0179 protein UNCMA_27840 of Methanocella arvoryzae (strain DSM 22066 / NBRC 105507 / MRE50).